The following is a 222-amino-acid chain: MAETALPTRAEVAARIDHTLLAPEATDDDVAALVAEARDLGVYAVCVSPSMLPVRAPGLVVATVAGFPSGKHHSLVKGAEARLAVDQGAAEVDMVIDVGAARAGEYSAVLADIVTVREAISDRAVLKVIIESAALSDEAIVEVCRVAERAGADFVKTSTGFHPAGGASVHAVRLMAETVGGRLGIKASGGIRTAAAAAELLAAGATRLGLSKSAAVLDGFPS.

The active-site Proton donor/acceptor is the D93. The Schiff-base intermediate with acetaldehyde role is filled by K156. The active-site Proton donor/acceptor is the K186.

It belongs to the DeoC/FbaB aldolase family. DeoC type 1 subfamily.

It is found in the cytoplasm. It catalyses the reaction 2-deoxy-D-ribose 5-phosphate = D-glyceraldehyde 3-phosphate + acetaldehyde. Its pathway is carbohydrate degradation; 2-deoxy-D-ribose 1-phosphate degradation; D-glyceraldehyde 3-phosphate and acetaldehyde from 2-deoxy-alpha-D-ribose 1-phosphate: step 2/2. Functionally, catalyzes a reversible aldol reaction between acetaldehyde and D-glyceraldehyde 3-phosphate to generate 2-deoxy-D-ribose 5-phosphate. The polypeptide is Deoxyribose-phosphate aldolase (Nocardia farcinica (strain IFM 10152)).